Consider the following 504-residue polypeptide: MAIQAEEISALIKQQLEKFDTTLTVEEVGTVTYIGDGVARATGLANAMAGELLEFANGTFGMAQNLESSEVGIIILGGFDDIREGDTVKRTGRIMEVPVGEQLIGRVVNALGQPIDGLGEIKTDKFRPVEVKAPGVMQRKSVFEPLQTGIKAIDALVPIGRGQRELIIGDRKTGKTSLAIDTILNQKDQNMIVIYVAIGQKDSTVRTQVETLRQMGAMDYTIVVNAGPSEPAPMLYLAPYVGAAMGEEFMYNGKHVLIVYDDLSKQATAYRELSLILRRPPGREAYPGDVFYLHSRLLERAAKLSDELGGGSMTALPIIETQAGDVSAYIPTNVISITDGQVFLDADQFYAGVRPAIDAGTSVSRVGGDAQIKAMKKVAGTLRLDLASFRELESFAQFGSDLDAATQAKLARGRRTVEVLKQPLHKPMPVQHQVIVLYALTHGYIDDIAVEDIQRFQDELIAYVDANANDLFKVIIDTKQLPEESAMNAAIEAFKAGFAGSAAE.

Residue 169–176 (GDRKTGKT) participates in ATP binding.

It belongs to the ATPase alpha/beta chains family. In terms of assembly, F-type ATPases have 2 components, CF(1) - the catalytic core - and CF(0) - the membrane proton channel. CF(1) has five subunits: alpha(3), beta(3), gamma(1), delta(1), epsilon(1). CF(0) has three main subunits: a(1), b(2) and c(9-12). The alpha and beta chains form an alternating ring which encloses part of the gamma chain. CF(1) is attached to CF(0) by a central stalk formed by the gamma and epsilon chains, while a peripheral stalk is formed by the delta and b chains.

The protein localises to the cell membrane. The enzyme catalyses ATP + H2O + 4 H(+)(in) = ADP + phosphate + 5 H(+)(out). Produces ATP from ADP in the presence of a proton gradient across the membrane. The alpha chain is a regulatory subunit. The sequence is that of ATP synthase subunit alpha from Leuconostoc citreum (strain KM20).